The primary structure comprises 100 residues: Small ribosomal subunit protein uS14 (100 aa).

This sequence belongs to the universal ribosomal protein uS14 family. As to quaternary structure, part of the 30S ribosomal subunit. Contacts proteins S3 and S10.

Binds 16S rRNA, required for the assembly of 30S particles and may also be responsible for determining the conformation of the 16S rRNA at the A site. The chain is Small ribosomal subunit protein uS14 from Rippkaea orientalis (strain PCC 8801 / RF-1) (Cyanothece sp. (strain PCC 8801)).